Here is a 169-residue protein sequence, read N- to C-terminus: Crossover junction endodeoxyribonuclease RuvC (169 aa).

Catalysis depends on residues aspartate 11, glutamate 71, and aspartate 143. Residues aspartate 11, glutamate 71, and aspartate 143 each coordinate Mg(2+).

This sequence belongs to the RuvC family. As to quaternary structure, homodimer which binds Holliday junction (HJ) DNA. The HJ becomes 2-fold symmetrical on binding to RuvC with unstacked arms; it has a different conformation from HJ DNA in complex with RuvA. In the full resolvosome a probable DNA-RuvA(4)-RuvB(12)-RuvC(2) complex forms which resolves the HJ. The cofactor is Mg(2+).

Its subcellular location is the cytoplasm. The catalysed reaction is Endonucleolytic cleavage at a junction such as a reciprocal single-stranded crossover between two homologous DNA duplexes (Holliday junction).. Its function is as follows. The RuvA-RuvB-RuvC complex processes Holliday junction (HJ) DNA during genetic recombination and DNA repair. Endonuclease that resolves HJ intermediates. Cleaves cruciform DNA by making single-stranded nicks across the HJ at symmetrical positions within the homologous arms, yielding a 5'-phosphate and a 3'-hydroxyl group; requires a central core of homology in the junction. The consensus cleavage sequence is 5'-(A/T)TT(C/G)-3'. Cleavage occurs on the 3'-side of the TT dinucleotide at the point of strand exchange. HJ branch migration catalyzed by RuvA-RuvB allows RuvC to scan DNA until it finds its consensus sequence, where it cleaves and resolves the cruciform DNA. The chain is Crossover junction endodeoxyribonuclease RuvC from Bartonella quintana (strain Toulouse) (Rochalimaea quintana).